The sequence spans 419 residues: uncharacterized protein (419 aa).

This is an uncharacterized protein from Connochaetes taurinus (Blue wildebeest).